Here is a 283-residue protein sequence, read N- to C-terminus: Protein/nucleic acid deglycase HchA (283 aa).

Residues His-86, Glu-91, and His-123 each coordinate Zn(2+). The active-site Nucleophile is Cys-185.

The protein belongs to the peptidase C56 family. HchA subfamily. As to quaternary structure, homodimer.

The protein localises to the cytoplasm. The enzyme catalyses N(omega)-(1-hydroxy-2-oxopropyl)-L-arginyl-[protein] + H2O = lactate + L-arginyl-[protein] + H(+). It carries out the reaction N(6)-(1-hydroxy-2-oxopropyl)-L-lysyl-[protein] + H2O = lactate + L-lysyl-[protein] + H(+). The catalysed reaction is S-(1-hydroxy-2-oxopropyl)-L-cysteinyl-[protein] + H2O = lactate + L-cysteinyl-[protein] + H(+). It catalyses the reaction N(omega)-(1-hydroxy-2-oxoethyl)-L-arginyl-[protein] + H2O = L-arginyl-[protein] + glycolate + H(+). The enzyme catalyses N(6)-(1-hydroxy-2-oxoethyl)-L-lysyl-[protein] + H2O = glycolate + L-lysyl-[protein] + H(+). It carries out the reaction S-(1-hydroxy-2-oxoethyl)-L-cysteinyl-[protein] + H2O = glycolate + L-cysteinyl-[protein] + H(+). The catalysed reaction is N(2)-(1-hydroxy-2-oxopropyl)-dGTP + H2O = lactate + dGTP + H(+). It catalyses the reaction N(2)-(1-hydroxy-2-oxopropyl)-GTP + H2O = lactate + GTP + H(+). The enzyme catalyses N(2)-(1-hydroxy-2-oxopropyl)-GDP + H2O = lactate + GDP + H(+). It carries out the reaction N(2)-(1-hydroxy-2-oxopropyl)-GMP + H2O = lactate + GMP + H(+). The catalysed reaction is N(2)-(1-hydroxy-2-oxoethyl)-dGTP + H2O = dGTP + glycolate + H(+). It catalyses the reaction N(2)-(1-hydroxy-2-oxoethyl)-GTP + H2O = glycolate + GTP + H(+). The enzyme catalyses N(2)-(1-hydroxy-2-oxoethyl)-GDP + H2O = glycolate + GDP + H(+). It carries out the reaction N(2)-(1-hydroxy-2-oxoethyl)-GMP + H2O = glycolate + GMP + H(+). The catalysed reaction is an N(2)-(1-hydroxy-2-oxopropyl)-guanosine in RNA + H2O = a guanosine in RNA + lactate + H(+). It catalyses the reaction an N(2)-(1-hydroxy-2-oxopropyl)-2'-deoxyguanosine in DNA + H2O = a 2'-deoxyguanosine in DNA + lactate + H(+). The enzyme catalyses an N(2)-(1-hydroxy-2-oxoethyl)-guanosine in RNA + H2O = a guanosine in RNA + glycolate + H(+). It carries out the reaction an N(2)-(1-hydroxy-2-oxoethyl)-2'-deoxyguanosine in DNA + H2O = a 2'-deoxyguanosine in DNA + glycolate + H(+). In terms of biological role, protein and nucleotide deglycase that catalyzes the deglycation of the Maillard adducts formed between amino groups of proteins or nucleotides and reactive carbonyl groups of glyoxals. Thus, functions as a protein deglycase that repairs methylglyoxal- and glyoxal-glycated proteins, and releases repaired proteins and lactate or glycolate, respectively. Deglycates cysteine, arginine and lysine residues in proteins, and thus reactivates these proteins by reversing glycation by glyoxals. Acts on early glycation intermediates (hemithioacetals and aminocarbinols), preventing the formation of Schiff bases and advanced glycation endproducts (AGE). Also functions as a nucleotide deglycase able to repair glycated guanine in the free nucleotide pool (GTP, GDP, GMP, dGTP) and in DNA and RNA. Is thus involved in a major nucleotide repair system named guanine glycation repair (GG repair), dedicated to reversing methylglyoxal and glyoxal damage via nucleotide sanitization and direct nucleic acid repair. Plays an important role in protecting cells from carbonyl stress. This chain is Protein/nucleic acid deglycase HchA, found in Escherichia coli O8 (strain IAI1).